A 125-amino-acid polypeptide reads, in one-letter code: Small ribosomal subunit protein eS8 (125 aa).

The tract at residues 1–34 (MQWQGRSVRKSTGGRYSPSRGKRRREIGSAPAET) is disordered.

The protein belongs to the eukaryotic ribosomal protein eS8 family. In terms of assembly, part of the 30S ribosomal subunit.

This Methanospirillum hungatei JF-1 (strain ATCC 27890 / DSM 864 / NBRC 100397 / JF-1) protein is Small ribosomal subunit protein eS8.